The primary structure comprises 126 residues: Nucleoside diphosphate kinase B (126 aa).

Positions 6, 37, 68, 79, and 89 each coordinate ATP. Catalysis depends on His92, which acts as the Pros-phosphohistidine intermediate.

Belongs to the NDK family. Mg(2+) is required as a cofactor.

The protein resides in the cytoplasm. It is found in the nucleus. The protein localises to the cell projection. It localises to the lamellipodium. Its subcellular location is the ruffle. The catalysed reaction is a 2'-deoxyribonucleoside 5'-diphosphate + ATP = a 2'-deoxyribonucleoside 5'-triphosphate + ADP. It carries out the reaction a ribonucleoside 5'-diphosphate + ATP = a ribonucleoside 5'-triphosphate + ADP. Its function is as follows. Major role in the synthesis of nucleoside triphosphates other than ATP. The sequence is that of Nucleoside diphosphate kinase B (nme2) from Macruronus magellanicus (Patagonian grenadier).